The following is a 782-amino-acid chain: E3 ubiquitin-protein ligase SopA (782 aa).

Positions 137-171 (VSVSANNRPTVSEGRTPPVSPSLSLQATSSPSSPA) are disordered. The span at 157–171 (PSLSLQATSSPSSPA) shows a compositional bias: low complexity. Residue Cys-753 is the Glycyl thioester intermediate of the active site.

It belongs to the SopA E3 ligase family. In terms of processing, ubiquitinated in the presence of host E1 ubiquitin-activating enzyme, E2 ubiquitin-conjugating enzyme and ubiquitin.

The protein resides in the secreted. Its subcellular location is the host cell. The catalysed reaction is S-ubiquitinyl-[E2 ubiquitin-conjugating enzyme]-L-cysteine + [acceptor protein]-L-lysine = [E2 ubiquitin-conjugating enzyme]-L-cysteine + N(6)-ubiquitinyl-[acceptor protein]-L-lysine.. In terms of biological role, effector proteins function to alter host cell physiology and promote bacterial survival in host tissues. This protein is an E3 ubiquitin ligase that interferes with host's ubiquitination pathway. This Salmonella newport (strain SL254) protein is E3 ubiquitin-protein ligase SopA (sopA).